The following is a 150-amino-acid chain: Actin-depolymerizing factor 3 (150 aa).

In terms of domain architecture, ADF-H spans 7–150 (GVAVSEECKA…TLDVLKDHTS (144 aa)).

This sequence belongs to the actin-binding proteins ADF family.

Actin-depolymerizing protein. Severs actin filaments (F-actin) and binds to actin monomers. This is Actin-depolymerizing factor 3 (ADF3) from Oryza sativa subsp. japonica (Rice).